The following is a 1576-amino-acid chain: eIF-2-alpha kinase GCN2 (1576 aa).

Positions 16-127 constitute an RWD domain; it reads NEIEALKAIF…SIVQDYLNDW (112 aa). The tract at residues 180–204 is disordered; the sequence is QDELQRRSYETPQSSSKKKTNSKET. 2 consecutive Protein kinase domains span residues 235–511 and 556–928; these read VLPL…HVIR and FEEL…EEFI. ATP-binding positions include 562 to 570 and Lys-585; that span reads LGRGGFGEV. Positions 673-714 are disordered; sequence YNSSADEEDPEASDISFQYSNTSDKEGSSDKDSSIEEASSVK. The segment covering 695-706 has biased composition (basic and acidic residues); sequence SDKEGSSDKDSS. Catalysis depends on Asp-772, which acts as the Proton acceptor.

Belongs to the protein kinase superfamily. Ser/Thr protein kinase family. GCN2 subfamily. As to quaternary structure, homodimer; homodimerization is important for kinase activation by uncharged tRNAs. Interacts (via N-terminal RWD domain) with gcn1 (via N- and C-terminus); this interaction stimulates gcn2 kinase activity in a gcn20-dependent manner in response to amino acid starvation. Interacts (via N-terminus) with the gcn1-gcn20 complex on translating ribosomes in amino acid-starved cells; gcn1 may bind near the ribosomal A-site and promotes the transfer of uncharged tRNAs from the A-site to the tRNA-binding domain in gcn2 for its subsequent kinase activation, and hence allowing fil1 translational activation and derepression of amino acid biosynthetic genes. Post-translationally, autophosphorylated.

It is found in the cytoplasm. The enzyme catalyses L-seryl-[protein] + ATP = O-phospho-L-seryl-[protein] + ADP + H(+). The catalysed reaction is L-threonyl-[protein] + ATP = O-phospho-L-threonyl-[protein] + ADP + H(+). With respect to regulation, the integrated stress response (ISR) is activated in response to conditions that promote ribosome collisions: gcn1, which acts as a ribosome collision sensor, activates gcn2. The RQC pathway and the integrated stress response (ISR) antagonize each other: hel2 prevents the activation of gcn2, while gcn2 suppresses RQC activation. Ribosome stalling-induced integrated stress response prefers ribosomes with empty A sites. The kinase activity is stimulated upon binding to uncharged tRNAs. Its function is as follows. Metabolic-stress sensing protein kinase that phosphorylates the alpha subunit of eukaryotic translation initiation factor 2 (eIF-2-alpha/SUI2) on 'Ser-52' in response to low amino acid, carbon, or purine availability. Required for adapatation to nutrient starvation by acting as a key component of the integrated stress response (ISR), by which cells alter their translational and transcriptional output in response to starvation. Converts phosphorylated eIF-2-alpha/SUI2 either to a competitive inhibitor of translation initiation factor eIF-2B, leading to a global protein synthesis repression, and thus to a reduced overall utilization of amino acids, or to a translational initiation activation of specific mRNAs, such as the transcriptional activator GCN4, and hence allowing GCN4-mediated reprogramming of transcription to alleviate nutrient depletion. Binds uncharged tRNAs. The chain is eIF-2-alpha kinase GCN2 from Schizosaccharomyces pombe (strain 972 / ATCC 24843) (Fission yeast).